Here is a 379-residue protein sequence, read N- to C-terminus: Probable leucine aminopeptidase ARB_01443 (379 aa).

The N-terminal stretch at 1–18 (MKIATLAVVSAFAATAIA) is a signal peptide. Zn(2+) contacts are provided by His-182 and Asp-201. Residues Asn-202 and Asn-226 are each glycosylated (N-linked (GlcNAc...) asparagine). Zn(2+) contacts are provided by Glu-240 and Asp-267. Cys-312 and Cys-316 are oxidised to a cystine. His-345 lines the Zn(2+) pocket.

The protein belongs to the peptidase M28 family. M28E subfamily. In terms of assembly, monomer. The cofactor is Zn(2+).

The protein resides in the secreted. Probable extracellular aminopeptidase which contributes to pathogenicity. The sequence is that of Probable leucine aminopeptidase ARB_01443 from Arthroderma benhamiae (strain ATCC MYA-4681 / CBS 112371) (Trichophyton mentagrophytes).